A 227-amino-acid chain; its full sequence is Small ribosomal subunit protein uS3 (227 aa).

The 71-residue stretch at 39–109 (IHRFFEKLTR…KIVINVDAVD (71 aa)) folds into the KH type-2 domain.

Belongs to the universal ribosomal protein uS3 family. Part of the 30S ribosomal subunit. Forms a tight complex with proteins S10 and S14.

In terms of biological role, binds the lower part of the 30S subunit head. Binds mRNA in the 70S ribosome, positioning it for translation. In Mesomycoplasma hyopneumoniae (strain 232) (Mycoplasma hyopneumoniae), this protein is Small ribosomal subunit protein uS3.